We begin with the raw amino-acid sequence, 222 residues long: Octanoyltransferase (222 aa).

Residues 34–214 enclose the BPL/LPL catalytic domain; that stretch reads AEAPSTVLLL…EFRKHEEALV (181 aa). Substrate is bound by residues 72-79, 144-146, and 157-159; these read RGGKLTWH, AIG, and GIA. Cys175 serves as the catalytic Acyl-thioester intermediate.

Belongs to the LipB family.

Its subcellular location is the cytoplasm. It carries out the reaction octanoyl-[ACP] + L-lysyl-[protein] = N(6)-octanoyl-L-lysyl-[protein] + holo-[ACP] + H(+). The protein operates within protein modification; protein lipoylation via endogenous pathway; protein N(6)-(lipoyl)lysine from octanoyl-[acyl-carrier-protein]: step 1/2. In terms of biological role, catalyzes the transfer of endogenously produced octanoic acid from octanoyl-acyl-carrier-protein onto the lipoyl domains of lipoate-dependent enzymes. Lipoyl-ACP can also act as a substrate although octanoyl-ACP is likely to be the physiological substrate. This chain is Octanoyltransferase, found in Arthrobacter sp. (strain FB24).